We begin with the raw amino-acid sequence, 816 residues long: H(+)/Cl(-) exchange transporter 5 (816 aa).

Over 1–124 (MAMWQGAMDN…WALIHSVSDA (124 aa)) the chain is Cytoplasmic. 2 consecutive transmembrane segments (helical) span residues 125–162 (FSGWLLMLLIGLFSGSLAGLIDISAHWMTDLKEGICTG) and 208–231 (VNYFMYVLWALLFAFLAVSLVKVF). The short motif at 237–241 (GSGIP) is the Selectivity filter part_1 element. Ser238 contributes to the chloride binding site. The helical intramembrane region spans 240–247 (IPEIKTIL). The next 2 helical transmembrane spans lie at 256 to 275 (LGKWTLVIKTITLVLAVSSG) and 281 to 300 (EGPLVHVACCCGNILCHRFN). The Selectivity filter part_2 motif lies at 279 to 283 (GKEGP). 2 intramembrane regions (helical) span residues 312–324 (VLSAAAAAGVSVA) and 328–336 (PIGGVLFSL). A run of 5 helical transmembrane segments spans residues 348 to 366 (LWRSFFAALVAAFTLRSIN), 389 to 414 (LVPFILLGIFGGLWGALFIRTNIAWC), 422 to 442 (LGKYPVIEVLIVTAITAILAF), 498 to 518 (MWQLALALILKIVITIFTFGM), and 523 to 542 (GLFIPSMAVGAIAGRLLGVG). The short motif at 523-527 (GLFIP) is the Selectivity filter part_3 element. Phe525 is a chloride binding site. Positions 570–584 (GLYAMVGAAACLGGV) form an intramembrane region, helical. Residues 585–587 (TRM) constitute an intramembrane region (note=Loop between two helices). Positions 588 to 599 (TVSLVVIMFELT) form an intramembrane region, helical. Positions 600–604 (GGLEY) form an intramembrane region, note=Loop between two helices. The helical transmembrane segment at 605-622 (IVPLMAAAMTSKWVADAL) threads the bilayer. Residues 623-816 (GREGIYDAHI…NQDPDSILFN (194 aa)) lie on the Cytoplasmic side of the membrane. Residue Tyr628 participates in chloride binding. 2 consecutive CBS domains span residues 656–720 (MKPR…ARKK) and 752–812 (ILDL…DPDS). ATP contacts are provided by residues Thr666, 687-689 (YSG), and 794-797 (TKKD).

The protein belongs to the chloride channel (TC 2.A.49) family. ClC-5/CLCN5 subfamily. As to quaternary structure, interacts with NEDD4 and NEDD4L. In terms of processing, ubiquitinated by NEDD4L in the presence of albumin; which promotes endocytosis and proteasomal degradation.

It is found in the golgi apparatus membrane. The protein localises to the endosome membrane. It localises to the cell membrane. The enzyme catalyses 2 chloride(in) + H(+)(out) = 2 chloride(out) + H(+)(in). In terms of biological role, proton-coupled chloride transporter. Functions as antiport system and exchanges chloride ions against protons. Important for normal acidification of the endosome lumen. May play an important role in renal tubular function. The CLC channel family contains both chloride channels and proton-coupled anion transporters that exchange chloride or another anion for protons. The absence of conserved gating glutamate residues is typical for family members that function as channels. This is H(+)/Cl(-) exchange transporter 5 (CLCN5) from Oryctolagus cuniculus (Rabbit).